A 257-amino-acid chain; its full sequence is S-methyl-5'-thioadenosine phosphorylase (257 aa).

Residues serine 10 and 50 to 51 (RH) contribute to the phosphate site. Methionine 180 provides a ligand contact to substrate. Threonine 181 contributes to the phosphate binding site. 204–206 (DYD) contributes to the substrate binding site.

It belongs to the PNP/MTAP phosphorylase family. MTAP subfamily. As to quaternary structure, homohexamer. Dimer of a homotrimer.

It catalyses the reaction S-methyl-5'-thioadenosine + phosphate = 5-(methylsulfanyl)-alpha-D-ribose 1-phosphate + adenine. Its pathway is amino-acid biosynthesis; L-methionine biosynthesis via salvage pathway; S-methyl-5-thio-alpha-D-ribose 1-phosphate from S-methyl-5'-thioadenosine (phosphorylase route): step 1/1. Its function is as follows. Catalyzes the reversible phosphorylation of S-methyl-5'-thioadenosine (MTA) to adenine and 5-methylthioribose-1-phosphate. Involved in the breakdown of MTA, a major by-product of polyamine biosynthesis. Responsible for the first step in the methionine salvage pathway after MTA has been generated from S-adenosylmethionine. Has broad substrate specificity with 6-aminopurine nucleosides as preferred substrates. This Pyrococcus horikoshii (strain ATCC 700860 / DSM 12428 / JCM 9974 / NBRC 100139 / OT-3) protein is S-methyl-5'-thioadenosine phosphorylase.